The sequence spans 50 residues: Toxic protein HokC (50 aa).

Residues 1-5 (MKQHK) lie on the Cytoplasmic side of the membrane. The helical; Signal-anchor for type II membrane protein transmembrane segment at 6-24 (AMIVALIVICITAVVAALV) threads the bilayer. Topologically, residues 25-50 (TRKDLCEVHIRTGQTEVAVFTAYESE) are periplasmic.

This sequence belongs to the Hok/Gef family. In terms of assembly, homodimer; disulfide-linked.

Its subcellular location is the cell inner membrane. Toxic component of a type I toxin-antitoxin (TA) system. When overexpressed kills cells within minutes; causes collapse of the transmembrane potential and arrest of respiration. Its toxic effect is probably neutralized by antisense antitoxin RNA SokC. The sequence is that of Toxic protein HokC from Escherichia coli (strain K12).